The primary structure comprises 83 residues: Cytochrome b559 subunit alpha (83 aa).

The chain crosses the membrane as a helical span at residues V21–W35. A heme-binding site is contributed by H23.

This sequence belongs to the PsbE/PsbF family. In terms of assembly, heterodimer of an alpha subunit and a beta subunit. PSII is composed of 1 copy each of membrane proteins PsbA, PsbB, PsbC, PsbD, PsbE, PsbF, PsbH, PsbI, PsbJ, PsbK, PsbL, PsbM, PsbT, PsbX, PsbY, PsbZ, Psb30/Ycf12, at least 3 peripheral proteins of the oxygen-evolving complex and a large number of cofactors. It forms dimeric complexes. It depends on heme b as a cofactor.

It is found in the plastid. It localises to the chloroplast thylakoid membrane. Functionally, this b-type cytochrome is tightly associated with the reaction center of photosystem II (PSII). PSII is a light-driven water:plastoquinone oxidoreductase that uses light energy to abstract electrons from H(2)O, generating O(2) and a proton gradient subsequently used for ATP formation. It consists of a core antenna complex that captures photons, and an electron transfer chain that converts photonic excitation into a charge separation. The chain is Cytochrome b559 subunit alpha from Acorus calamus (Sweet flag).